A 703-amino-acid chain; its full sequence is MSLSRCPTDNSSSRINSSVPLINSSSPATPPESFDPQVFPSSLIHGDNLLPQDDQIASDPRSESNSCNGNTSSSLPCTDSYQYPLKHSCTPSFLRKFNESIENVSYKCLDHSPPDSVPGDFSISLVPQRNFLYSHSSLPPKIISIDRNNRIKLDNSISSNSDNFPPSPKVDTSNTVSPGSKPISEDLEDLNLQSIVQTFEDLPEGIQSYAFFQLLRSCNRQSMRLLLNECEPLLKKDILSNLPFSIVQSILLNLDIHSFLSCRLVSPTWNRILDVHTSYWKHMFSLFGFQINENDWKYANPNLNRPPFLHNDQISDDYFPEIFKRHFLNRKRWLFPSIPPSHLSFPIHVPNFMITSLLLHKDRIITTSGSGTIQIHNAITGVLEARLEGHKEGVWAVKIHENTLVSGSIDKTVRVWNIEKAKCTHIFRGHISIIRCLEILVPSRLIRHGVEIVEPDQPYIVSGSRDHTLRVWKLPKNTDPPYLPDNTNSIDRWEKNPYFVHTLIGHTDSVRTISGYGDILVSGSYDSSIRIWRVSTGECLYHLRGHSLRIYSVLYEPERNICISGSMDKSIRVWDLSTGTCKYVLEGHDAFVTLLNVFQNRLISGSADSTIRIWDLNTGKPLMVLPSNSGYISSFVSDEHKIISGNDGSVKLWDVRTGKLLRFLLTDLTKIWHVDFDAMRCVAAVQRDDQAYLEVINFSGSRP.

3 stretches are compositionally biased toward polar residues: residues 1-27 (MSLS…SSSP), 63-73 (ESNSCNGNTSS), and 156-178 (SISS…TVSP). 2 disordered regions span residues 1–73 (MSLS…NTSS) and 156–180 (SISS…SPGS). The interaction with pop1 stretch occupies residues 1-170 (MSLSRCPTDN…SDNFPPSPKV (170 aa)). Residues 236 to 283 (KDILSNLPFSIVQSILLNLDIHSFLSCRLVSPTWNRILDVHTSYWKHM) enclose the F-box domain. WD repeat units follow at residues 389–417 (GHKE…RVWN), 429–473 (GHIS…RVWK), 505–533 (GHTD…RIWR), 545–575 (GHSL…RVWD), 587–615 (GHDA…RIWD), and 625–654 (LPSN…KLWD).

As to quaternary structure, homodimer and heterodimer with pop1. Binds to cul1, pip1 and phosphorylated cdc18.

The protein resides in the cytoplasm. It localises to the nucleus. Involved in maintenance of ploidy through proteasome dependent degradation of CDK inhibitor rum1 and S-phase initiator cdc18. Functions as a recognition factor for rum1 and cdc18, which are subsequently ubiquitinated and targeted to the 26S proteasome for degradation. Together with pop1, required for cig2 instability during G2 and M phase and cig2 degradation in exponentially growing cells. This is WD repeat-containing protein pop2 (pop2) from Schizosaccharomyces pombe (strain 972 / ATCC 24843) (Fission yeast).